The primary structure comprises 103 residues: Small ribosomal subunit protein bS20 (103 aa).

Residues 1–20 (MATAKPKKKNPRLASGRKRV) are compositionally biased toward basic residues. The interval 1–31 (MATAKPKKKNPRLASGRKRVRQDTKLNAANT) is disordered.

Belongs to the bacterial ribosomal protein bS20 family.

Its function is as follows. Binds directly to 16S ribosomal RNA. The protein is Small ribosomal subunit protein bS20 of Polaromonas sp. (strain JS666 / ATCC BAA-500).